The primary structure comprises 562 residues: Adenylate kinase isoenzyme 5 (562 aa).

2 adenylate kinase regions span residues 133–316 (KIIL…MAVD) and 377–559 (KIIF…TAID). 142-147 (GSGKGT) contacts ATP. The segment at 162–193 (SVGELLRKKIHSTSSNRKWSLIAKIITTGELA) is NMP 1. Residues arginine 168, 191 to 193 (ELA), 219 to 222 (GFPR), and glutamine 226 each bind AMP. Residues 256–266 (KRAEQQGRPDD) form an LID 1 region. Arginine 257 contributes to the ATP binding site. Arginine 263 and arginine 274 together coordinate AMP. An ATP-binding site is contributed by 386 to 391 (GSGKGT). An NMP 2 region spans residues 406–435 (STGELLREELASESERSKLIRDIMERGDLV). AMP is bound by residues threonine 407, arginine 412, 433-435 (DLV), 462-465 (GYPR), and glutamine 469. Positions 499-509 (QRSRSSLPVDD) are LID 2. Arginine 500 lines the ATP pocket. Arginine 517 contributes to the AMP binding site. Glycine 545 provides a ligand contact to ATP.

It belongs to the adenylate kinase family. Monomer. Interacts with YWHAZ. As to expression, brain specific.

The protein localises to the cytoplasm. It carries out the reaction AMP + ATP = 2 ADP. It catalyses the reaction a 2'-deoxyribonucleoside 5'-diphosphate + ATP = a 2'-deoxyribonucleoside 5'-triphosphate + ADP. The enzyme catalyses a ribonucleoside 5'-diphosphate + ATP = a ribonucleoside 5'-triphosphate + ADP. In terms of biological role, nucleoside monophosphate (NMP) kinase that catalyzes the reversible transfer of the terminal phosphate group between nucleoside triphosphates and monophosphates. Active on AMP and dAMP with ATP as a donor. When GTP is used as phosphate donor, the enzyme phosphorylates AMP, CMP, and to a small extent dCMP. Also displays broad nucleoside diphosphate kinase activity. This chain is Adenylate kinase isoenzyme 5 (AK5), found in Homo sapiens (Human).